Reading from the N-terminus, the 138-residue chain is Basic phospholipase A2 Tpu-G6D49 (138 aa).

An N-terminal signal peptide occupies residues 1 to 16 (MRTLWIMAVLLVGVEG). Disulfide bonds link Cys42–Cys131, Cys44–Cys60, Cys59–Cys111, Cys65–Cys138, Cys66–Cys104, Cys73–Cys97, and Cys91–Cys102. Positions 43, 45, and 47 each coordinate Ca(2+). His63 is an active-site residue. Position 64 (Asp64) interacts with Ca(2+). Residue Asp105 is part of the active site.

As to quaternary structure, monomer. It depends on Ca(2+) as a cofactor. As to expression, expressed by the venom gland.

The protein localises to the secreted. The enzyme catalyses a 1,2-diacyl-sn-glycero-3-phosphocholine + H2O = a 1-acyl-sn-glycero-3-phosphocholine + a fatty acid + H(+). In terms of biological role, snake venom phospholipase A2 (PLA2) that impairs hemostasis. It weakly inhibits ADP-induced platelet aggregation when tested on platelet rich plasma from human and rabbit blood (15-25% of inhibition at 5-10 ug of enzyme), and dose-dependently inhibits blood coagulation, possibly by inhibiting thrombin activation. Also induces local edema a few hours after injection in the hind foot. Exhibits high hydrolytic activities toward L-dipalmitoyl phosphatidylcholine. PLA2 catalyzes the calcium-dependent hydrolysis of the 2-acyl groups in 3-sn-phosphoglycerides. This Craspedocephalus puniceus (Flat-nosed pitviper) protein is Basic phospholipase A2 Tpu-G6D49.